The chain runs to 367 residues: Palmitoyltransferase ZDHHC2 (367 aa).

Residues 1–16 (MAPSGPGSSARRRCRR) are Cytoplasmic-facing. The helical transmembrane segment at 17–37 (VLYWIPVVFITLLLGWSYYAY) threads the bilayer. Residues 38-54 (AIQLCIVSMENTGEQVV) lie on the Lumenal side of the membrane. The helical transmembrane segment at 55–75 (CLMAYHLLFAMFVWSYWKTIF) threads the bilayer. Residues 76–170 (TLPMNPSKEF…NNCVGFSNYK (95 aa)) lie on the Cytoplasmic side of the membrane. Positions 127–177 (RYCDRCQLIKPDRCHHCSVCDKCILKMDHHCPWVNNCVGFSNYKFFLLFLA) constitute a DHHC domain. The S-palmitoyl cysteine intermediate role is filled by Cys157. The helical transmembrane segment at 171 to 191 (FFLLFLAYSLLYCLFIAATDL) threads the bilayer. The Lumenal segment spans residues 192 to 208 (QYFIKFWTNGLPDTQAK). Residues 209–229 (FHIMFLFFAAAMFSVSLSSLF) traverse the membrane as a helical segment. Residues 230–367 (GYHCWLVSKN…NPALTMENET (138 aa)) lie on the Cytoplasmic side of the membrane. A mediates localization to plasma membrane and recycling endosomes region spans residues 299 to 367 (NQDPEQASTP…NPALTMENET (69 aa)). The disordered stretch occupies residues 330 to 367 (ESQSHLLTDSQSWTESSINPGKCKAGMSNPALTMENET). Residues 333–348 (SHLLTDSQSWTESSIN) show a composition bias toward polar residues. Positions 335 to 336 (LL) match the Non-canonical dileucine endocytic signal motif. The residue at position 341 (Ser341) is a Phosphoserine. The NPxY-like endocytic signal signature appears at 358–361 (NPAL).

Belongs to the DHHC palmitoyltransferase family. Monomer. Homodimer. The monomeric form has a higher catalytic activity. Post-translationally, autopalmitoylated. As to expression, ubiquitously expressed. Reduced expression in colorectal cancers with liver metastasis.

The protein localises to the postsynaptic density. It localises to the postsynaptic recycling endosome membrane. Its subcellular location is the cell membrane. It is found in the endoplasmic reticulum membrane. The protein resides in the golgi apparatus membrane. The enzyme catalyses L-cysteinyl-[protein] + hexadecanoyl-CoA = S-hexadecanoyl-L-cysteinyl-[protein] + CoA. It carries out the reaction L-cysteinyl-[protein] + tetradecanoyl-CoA = S-tetradecanoyl-L-cysteinyl-[protein] + CoA. It catalyses the reaction L-cysteinyl-[protein] + octadecanoyl-CoA = S-octadecanoyl-L-cysteinyl-[protein] + CoA. Its function is as follows. Palmitoyltransferase that catalyzes the addition of palmitate onto various protein substrates and is involved in a variety of cellular processes. Has no stringent fatty acid selectivity and in addition to palmitate can also transfer onto target proteins myristate from tetradecanoyl-CoA and stearate from octadecanoyl-CoA. In the nervous system, plays a role in long term synaptic potentiation by palmitoylating AKAP5 through which it regulates protein trafficking from the dendritic recycling endosomes to the plasma membrane and controls both structural and functional plasticity at excitatory synapses. In dendrites, mediates the palmitoylation of DLG4 when synaptic activity decreases and induces synaptic clustering of DLG4 and associated AMPA-type glutamate receptors. Also mediates the de novo and turnover palmitoylation of RGS7BP, a shuttle for Gi/o-specific GTPase-activating proteins/GAPs, promoting its localization to the plasma membrane in response to the activation of G protein-coupled receptors. Through the localization of these GTPase-activating proteins/GAPs, it also probably plays a role in G protein-coupled receptors signaling in neurons. Also probably plays a role in cell adhesion by palmitoylating CD9 and CD151 to regulate their expression and function. Palmitoylates the endoplasmic reticulum protein CKAP4 and regulates its localization to the plasma membrane. Could also palmitoylate LCK and regulate its localization to the plasma membrane. In terms of biological role, (Microbial infection) Promotes Chikungunya virus (CHIKV) replication by mediating viral nsp1 palmitoylation. In Homo sapiens (Human), this protein is Palmitoyltransferase ZDHHC2.